An 867-amino-acid polypeptide reads, in one-letter code: Alanine--tRNA ligase (867 aa).

4 residues coordinate Zn(2+): H559, H563, C661, and H665.

This sequence belongs to the class-II aminoacyl-tRNA synthetase family. It depends on Zn(2+) as a cofactor.

It localises to the cytoplasm. The catalysed reaction is tRNA(Ala) + L-alanine + ATP = L-alanyl-tRNA(Ala) + AMP + diphosphate. Its function is as follows. Catalyzes the attachment of alanine to tRNA(Ala) in a two-step reaction: alanine is first activated by ATP to form Ala-AMP and then transferred to the acceptor end of tRNA(Ala). Also edits incorrectly charged Ser-tRNA(Ala) and Gly-tRNA(Ala) via its editing domain. The protein is Alanine--tRNA ligase of Aquifex aeolicus (strain VF5).